The primary structure comprises 675 residues: Serine/threonine-protein kinase ATG1 (675 aa).

In terms of domain architecture, Protein kinase spans 25 to 328 (FVIGGEIGKG…FEDFFNDPVV (304 aa)). Residues 31-39 (IGKGSFAQV) and Lys54 contribute to the ATP site. The active-site Proton acceptor is Asp168. Residues 339 to 374 (DIPKVEQKPSRDLRSLEADPQREQSELAKSPRERPL) show a composition bias toward basic and acidic residues. Disordered regions lie at residues 339–455 (DIPK…ERKL) and 501–577 (RLTS…TTRS). Polar residues-rich tracts occupy residues 390–399 (ANVSARTGQS), 516–538 (ATQQ…SAVQ), and 556–565 (ASRSLNTSSA).

Belongs to the protein kinase superfamily. Ser/Thr protein kinase family. APG1/unc-51/ULK1 subfamily. As to quaternary structure, homodimer. Forms a ternary complex with ATG13 and ATG17.

The protein localises to the cytoplasm. It is found in the preautophagosomal structure membrane. It carries out the reaction L-seryl-[protein] + ATP = O-phospho-L-seryl-[protein] + ADP + H(+). The catalysed reaction is L-threonyl-[protein] + ATP = O-phospho-L-threonyl-[protein] + ADP + H(+). Its function is as follows. Serine/threonine protein kinase involved in the cytoplasm to vacuole transport (Cvt) and found to be essential in autophagy, where it is required for the formation of autophagosomes. Involved in the clearance of protein aggregates which cannot be efficiently cleared by the proteasome. Required for selective autophagic degradation of the nucleus (nucleophagy) as well as for mitophagy which contributes to regulate mitochondrial quantity and quality by eliminating the mitochondria to a basal level to fulfill cellular energy requirements and preventing excess ROS production. Also involved in endoplasmic reticulum-specific autophagic process, in selective removal of ER-associated degradation (ERAD) substrates. Plays a key role in ATG9 and ATG23 cycling through the pre-autophagosomal structure and is necessary to promote ATG18 binding to ATG9 through phosphorylation of ATG9. Catalyzes phosphorylation of ATG4, decreasing the interaction between ATG4 and ATG8 and impairing deconjugation of PE-conjugated forms of ATG8. In Colletotrichum lindemuthianum (Bean anthracnose fungus), this protein is Serine/threonine-protein kinase ATG1.